A 372-amino-acid chain; its full sequence is Cytoplasmic envelopment protein 2 (372 aa).

The disordered stretch occupies residues 1-38; sequence MAQRALWRPQATPGPPGAAAPPGHRGAPPDARAPDPGP. Residues 20-30 are compositionally biased toward low complexity; sequence APPGHRGAPPD.

The protein belongs to the herpesviridae cytoplasmic envelopment protein 2 family. As to quaternary structure, interacts with cytoplasmic envelopment protein 3 and with the capsid.

It is found in the virion tegument. It localises to the host cytoplasm. Its subcellular location is the host nucleus. In terms of biological role, plays a critical role in cytoplasmic virus egress. Participates in the final step of tegumentation and envelope acquisition within the host cytoplasm by directly interacting with the capsid. Upon virion binding to target cell, a signaling cascade is triggered to disrupt the interaction with the capsid, thereby preparing capsid uncoating. This is Cytoplasmic envelopment protein 2 (UL16) from Human herpesvirus 2 (strain HG52) (HHV-2).